The primary structure comprises 192 residues: Phosphoheptose isomerase (192 aa).

Positions 37-192 constitute an SIS domain; sequence LADSFKAGGK…IQLIEKEMVK (156 aa). 52-54 is a substrate binding site; sequence NGG. 2 residues coordinate Zn(2+): histidine 61 and glutamate 65. Substrate is bound by residues glutamate 65, 93–94, 119–121, serine 124, and glutamine 172; these read ND and STS. Zn(2+) is bound by residues glutamine 172 and histidine 180.

This sequence belongs to the SIS family. GmhA subfamily. In terms of assembly, homotetramer. Zn(2+) is required as a cofactor.

The protein resides in the cytoplasm. It carries out the reaction 2 D-sedoheptulose 7-phosphate = D-glycero-alpha-D-manno-heptose 7-phosphate + D-glycero-beta-D-manno-heptose 7-phosphate. Its pathway is carbohydrate biosynthesis; D-glycero-D-manno-heptose 7-phosphate biosynthesis; D-glycero-alpha-D-manno-heptose 7-phosphate and D-glycero-beta-D-manno-heptose 7-phosphate from sedoheptulose 7-phosphate: step 1/1. In terms of biological role, catalyzes the isomerization of sedoheptulose 7-phosphate in D-glycero-D-manno-heptose 7-phosphate. This is Phosphoheptose isomerase from Enterobacter sp. (strain 638).